A 209-amino-acid polypeptide reads, in one-letter code: Uracil phosphoribosyltransferase (209 aa).

5-phospho-alpha-D-ribose 1-diphosphate is bound by residues Arg79, Arg104, and 131-139; that span reads DPMLATGGS. Uracil contacts are provided by residues Ile194 and 199–201; that span reads GDA. Residue Asp200 participates in 5-phospho-alpha-D-ribose 1-diphosphate binding.

The protein belongs to the UPRTase family. Mg(2+) is required as a cofactor.

The enzyme catalyses UMP + diphosphate = 5-phospho-alpha-D-ribose 1-diphosphate + uracil. It functions in the pathway pyrimidine metabolism; UMP biosynthesis via salvage pathway; UMP from uracil: step 1/1. Allosterically activated by GTP. Its function is as follows. Catalyzes the conversion of uracil and 5-phospho-alpha-D-ribose 1-diphosphate (PRPP) to UMP and diphosphate. The sequence is that of Uracil phosphoribosyltransferase from Agathobacter rectalis (strain ATCC 33656 / DSM 3377 / JCM 17463 / KCTC 5835 / VPI 0990) (Eubacterium rectale).